Consider the following 289-residue polypeptide: Ribosomal RNA small subunit methyltransferase H (289 aa).

S-adenosyl-L-methionine-binding positions include 40-42 (GGH), Asp-60, Phe-84, Asp-106, and Gln-113.

It belongs to the methyltransferase superfamily. RsmH family.

The protein localises to the cytoplasm. It catalyses the reaction cytidine(1402) in 16S rRNA + S-adenosyl-L-methionine = N(4)-methylcytidine(1402) in 16S rRNA + S-adenosyl-L-homocysteine + H(+). Its function is as follows. Specifically methylates the N4 position of cytidine in position 1402 (C1402) of 16S rRNA. This Haemophilus influenzae (strain PittGG) protein is Ribosomal RNA small subunit methyltransferase H.